The chain runs to 247 residues: DNA polymerase sliding clamp (247 aa).

Belongs to the PCNA family. Homotrimer. The subunits circularize to form a toroid; DNA passes through its center. Replication factor C (RFC) is required to load the toroid on the DNA.

Its function is as follows. Sliding clamp subunit that acts as a moving platform for DNA processing. Responsible for tethering the catalytic subunit of DNA polymerase and other proteins to DNA during high-speed replication. In Methanoregula boonei (strain DSM 21154 / JCM 14090 / 6A8), this protein is DNA polymerase sliding clamp.